A 143-amino-acid chain; its full sequence is SsrA-binding protein (143 aa).

The protein belongs to the SmpB family.

Its subcellular location is the cytoplasm. Its function is as follows. Required for rescue of stalled ribosomes mediated by trans-translation. Binds to transfer-messenger RNA (tmRNA), required for stable association of tmRNA with ribosomes. tmRNA and SmpB together mimic tRNA shape, replacing the anticodon stem-loop with SmpB. tmRNA is encoded by the ssrA gene; the 2 termini fold to resemble tRNA(Ala) and it encodes a 'tag peptide', a short internal open reading frame. During trans-translation Ala-aminoacylated tmRNA acts like a tRNA, entering the A-site of stalled ribosomes, displacing the stalled mRNA. The ribosome then switches to translate the ORF on the tmRNA; the nascent peptide is terminated with the 'tag peptide' encoded by the tmRNA and targeted for degradation. The ribosome is freed to recommence translation, which seems to be the essential function of trans-translation. The sequence is that of SsrA-binding protein from Mycoplasmopsis synoviae (strain 53) (Mycoplasma synoviae).